Consider the following 609-residue polypeptide: Elongation factor 4 (609 aa).

In terms of domain architecture, tr-type G spans 11–193 (ERIRNFSIIA…QIVEKIPAPS (183 aa)). Residues 23-28 (DHGKST) and 140-143 (NKID) each bind GTP.

This sequence belongs to the TRAFAC class translation factor GTPase superfamily. Classic translation factor GTPase family. LepA subfamily.

The protein localises to the cell membrane. It carries out the reaction GTP + H2O = GDP + phosphate + H(+). Functionally, required for accurate and efficient protein synthesis under certain stress conditions. May act as a fidelity factor of the translation reaction, by catalyzing a one-codon backward translocation of tRNAs on improperly translocated ribosomes. Back-translocation proceeds from a post-translocation (POST) complex to a pre-translocation (PRE) complex, thus giving elongation factor G a second chance to translocate the tRNAs correctly. Binds to ribosomes in a GTP-dependent manner. In Geobacillus thermodenitrificans (strain NG80-2), this protein is Elongation factor 4.